Consider the following 435-residue polypeptide: MQSGGDFSNGFHGDHHRELELEDKQGPSLSSFGRAKKRSHAGARDPRGGLANVLRVSDQLGEHKSLETSESSPPPCTDFDVAYFHSYAHVGIHEEMIKDRARTETYREAIMQHQSLIEGKVVVDVGCGTGILSIFCAQAGAKRVYAVDASDIAVQAKEVVKANGLSDKVIVLHGRVEDVEIDEEVDVIISEWMGYMLLYESMLGSVITARDRWLKPGGLILPSHATLYMAPISHPDRYSHSIDFWRNVYGIDMSAMMQLAKQCAFEEPSVESISGENVLTWPEVVKHIDCKTIKIQELDSVTARYKFNSMMRAPMHGFAFWFDVEFSGPASSPAKNTSETSIASGSSSISPSGEVNQKKRTNPSDALVLSTSPESPPTHWQQTIVYFYDPIDVEQDQVIEGSVTLSQSKENKRFMNIHLEYSSAGRSFVKESVMR.

The interval 1–48 (MQSGGDFSNGFHGDHHRELELEDKQGPSLSSFGRAKKRSHAGARDPRG) is disordered. A compositionally biased stretch (basic and acidic residues) spans 12 to 25 (HGDHHRELELEDKQ). One can recognise an SAM-dependent MTase PRMT-type domain in the interval 80-418 (DVAYFHSYAH…KENKRFMNIH (339 aa)). H93, R102, G126, D148, and E177 together coordinate S-adenosyl-L-methionine. Residues E191 and E200 contribute to the active site. The segment at 333–377 (PAKNTSETSIASGSSSISPSGEVNQKKRTNPSDALVLSTSPESPP) is disordered. A compositionally biased stretch (low complexity) spans 337 to 354 (TSETSIASGSSSISPSGE).

Belongs to the class I-like SAM-binding methyltransferase superfamily. Protein arginine N-methyltransferase family. PRMT6 subfamily.

In terms of biological role, arginine methyltransferase that can both catalyze the formation of omega-N monomethylarginine (MMA) and asymmetrical dimethylarginine (aDMA). The chain is Probable protein arginine N-methyltransferase 6 (PRMT6) from Arabidopsis thaliana (Mouse-ear cress).